A 257-amino-acid polypeptide reads, in one-letter code: Large ribosomal subunit protein uL3 (257 aa).

Q151 carries the N5-methylglutamine modification. The tract at residues 218–257 is disordered; the sequence is YPASIKSAANTNTAPADAPVETPAEEAVVDTAATDGAQES. Over residues 225–236 the composition is skewed to low complexity; sequence AANTNTAPADAP.

Belongs to the universal ribosomal protein uL3 family. Part of the 50S ribosomal subunit. Forms a cluster with proteins L14 and L19. Post-translationally, methylated by PrmB.

One of the primary rRNA binding proteins, it binds directly near the 3'-end of the 23S rRNA, where it nucleates assembly of the 50S subunit. In Sphingopyxis alaskensis (strain DSM 13593 / LMG 18877 / RB2256) (Sphingomonas alaskensis), this protein is Large ribosomal subunit protein uL3.